A 160-amino-acid polypeptide reads, in one-letter code: 6-hydroxypseudooxynicotine dehydrogenase complex subunit beta (160 aa).

Residues 4–80 (FRLTVEVNGV…NSRIETVESL (77 aa)) enclose the 2Fe-2S ferredoxin-type domain. Positions 42, 47, 50, 62, 101, 104, 137, and 139 each coordinate [2Fe-2S] cluster.

Heterohexamer of 2 alpha (kdhA), 2 beta (kdhB) and 2 gamma (kdhC) subunit. Dimer of heterotrimers. [2Fe-2S] cluster is required as a cofactor.

It catalyses the reaction 6-hydroxypseudooxynicotine + A + H2O = 2,6-dihydroxypseudooxynicotine + AH2. It participates in alkaloid degradation; nicotine degradation. Functionally, molybdo-flavoprotein enzyme complex involved in nicotine degradation. The subunit gamma (large subunit) contains the substrate-binding sites, the subunit alpha (medium subunit) binds FAD and the subunit beta (small subunit) has a 2Fe-2S ferredoxin-type domain which binds 2 2Fe-2S clusters. This is 6-hydroxypseudooxynicotine dehydrogenase complex subunit beta (kdhB) from Paenarthrobacter nicotinovorans (Arthrobacter nicotinovorans).